A 957-amino-acid polypeptide reads, in one-letter code: Receptor-like protein 34 (957 aa).

The signal sequence occupies residues 1 to 31; sequence MKGSWVVSTSIIRITLSFTFLFICHFSDVLA. The Extracellular segment spans residues 32–910; sequence APTRHLCRPE…EEEDEDLISW (879 aa). 7 N-linked (GlcNAc...) asparagine glycosylation sites follow: Asn-78, Asn-101, Asn-114, Asn-143, Asn-167, Asn-191, and Asn-215. LRR repeat units lie at residues 120–143, 144–167, 168–192, 194–216, 217–240, 241–264, 266–287, 288–312, 313–336, 338–360, 361–384, 386–409, 412–434, 435–459, 460–483, 487–510, 511–534, and 535–557; these read LHFLTTLDRSHNDFEGQITSSIEN, LSHLTSLDLSYNRFSGQILNSIGN, LSRLTSLDLSFNQFSGQIPSSIGNL, HLTFLGLSGNRFFGQIPSSIGNL, SHLTFLGLSGNRFFGQFPSSIGGL, SNLTNLHLSYNKYSGQIPSSIGNL, QLIVLYLSVNNFYGEIPSSFGN, LNQLTRLDVSFNKLGGNFPNVLLNL, TGLSVVSLSNNKFTGTLPPNITSL, NLMAFYASDNAFTGTFPSFLFII, PSLTYLGLSGNQLKGTLEFGNISS, SNLQYLNIGSNNFIGPIPSSISKL, LQELGISHLNTQCRPVDFSIFSH, LKSLDDLRLSYLTTTTIDLNDILPY, FKTLRSLDLSGNLVSATNKSSVSS, SQSIQSLYLSGCGITDFPEILRTQ, HELGFLDVSNNKIKGQVPGWLWTL, and PNLFYLNLSNNTFIGFQRPTKPE. Residues Asn-242 and Asn-263 are each glycosylated (N-linked (GlcNAc...) asparagine). 2 N-linked (GlcNAc...) asparagine glycosylation sites follow: Asn-311 and Asn-332. Asn-381 is a glycosylation site (N-linked (GlcNAc...) asparagine). Asn-477 carries an N-linked (GlcNAc...) asparagine glycan. Residues Asn-541, Asn-544, Asn-569, Asn-593, Asn-608, and Asn-618 are each glycosylated (N-linked (GlcNAc...) asparagine). Residues 558–580 form an LRR 19; degenerate repeat; that stretch reads PSMAYLLGSNNNFTGKIPSFICE. LRR repeat units lie at residues 581-605, 606-630, 632-652, 653-675, 677-698, 699-722, 765-789, 790-813, 815-837, and 839-862; these read LRSLYTLDLSDNNFSGSIPRCMENL, KSNLSELNLRQNNLSGGFPEHIFES, RSLDVGHNQLVGKLPRSLRFF, SNLEVLNVESNRINDMFPFWLSS, QKLQVLVLRSNAFHGPINQALF, PKLRIIDISHNHFNGSLPTEYFVE, LTIYTAVDFSGNKFEGEIPKSIGLL, KELHVLNLSNNAFTGHIPSSIGNL, ALESLDVSQNKLYGEIPQEIGNL, and LLSYMNFSHNQLTGLVPGGQQFLT. Asn-712 carries N-linked (GlcNAc...) asparagine glycosylation. N-linked (GlcNAc...) asparagine glycans are attached at residues Asn-796, Asn-812, Asn-836, and Asn-844. The helical transmembrane segment at 911 to 931 threads the bilayer; the sequence is IAAAIGFGPGIAFGLMFGYIL. Over 932-957 the chain is Cytoplasmic; sequence VSYKPEWFMNPFGRNNRRRKRHTTTH.

The protein belongs to the RLP family.

It localises to the cell membrane. The protein is Receptor-like protein 34 of Arabidopsis thaliana (Mouse-ear cress).